Here is a 294-residue protein sequence, read N- to C-terminus: Fructose-bisphosphate aldolase class 1 (294 aa).

Glutamate 176 functions as the Proton acceptor in the catalytic mechanism. Lysine 213 functions as the Schiff-base intermediate with dihydroxyacetone-P in the catalytic mechanism.

The protein belongs to the class I fructose-bisphosphate aldolase family.

The catalysed reaction is beta-D-fructose 1,6-bisphosphate = D-glyceraldehyde 3-phosphate + dihydroxyacetone phosphate. It functions in the pathway carbohydrate degradation; glycolysis; D-glyceraldehyde 3-phosphate and glycerone phosphate from D-glucose: step 4/4. The protein is Fructose-bisphosphate aldolase class 1 of Oceanobacillus iheyensis (strain DSM 14371 / CIP 107618 / JCM 11309 / KCTC 3954 / HTE831).